The sequence spans 226 residues: Transmembrane gamma-carboxyglutamic acid protein 4 (226 aa).

Positions methionine 1–alanine 17 are cleaved as a signal peptide. The propeptide occupies valine 18–arginine 49. Residues leucine 50–aspartate 113 lie on the Extracellular side of the membrane. One can recognise a Gla domain in the interval asparagine 52–isoleucine 98. Cysteines 69 and 74 form a disulfide. Glutamate 72 bears the 4-carboxyglutamate mark. Residues valine 114–valine 134 traverse the membrane as a helical segment. The Cytoplasmic portion of the chain corresponds to glycine 135–histidine 226. A Phosphoserine modification is found at serine 164. Residues leucine 186–tyrosine 189 carry the LPXY motif; mediates binding to WW domain-containing proteins motif. The short motif at proline 204–tyrosine 207 is the PPXY motif; mediates binding to WW domain-containing proteins element.

This sequence belongs to the commissureless family. Interacts (via cytoplasmic domain) with WW domain-containing proteins MAGI1, MAGI3, NEDD4, NEDD4L, WWTR1/TAZ and YAP1. In terms of processing, gamma-carboxyglutamate residues are formed by vitamin K dependent carboxylation. These residues are essential for the binding of calcium.

It localises to the endoplasmic reticulum-Golgi intermediate compartment membrane. Its subcellular location is the cell membrane. Its function is as follows. May control axon guidance across the CNS. Prevents the delivery of ROBO1 at the cell surface and down-regulates its expression. This Mus musculus (Mouse) protein is Transmembrane gamma-carboxyglutamic acid protein 4 (Prrg4).